Here is a 287-residue protein sequence, read N- to C-terminus: Orotidine 5'-phosphate decarboxylase (287 aa).

The active-site Proton donor is the Lys97.

This sequence belongs to the OMP decarboxylase family. Type 2 subfamily.

The enzyme catalyses orotidine 5'-phosphate + H(+) = UMP + CO2. Its pathway is pyrimidine metabolism; UMP biosynthesis via de novo pathway; UMP from orotate: step 2/2. This Clostridium perfringens (strain 13 / Type A) protein is Orotidine 5'-phosphate decarboxylase (pyrF).